A 213-amino-acid chain; its full sequence is Imidazole glycerol phosphate synthase subunit HisH (213 aa).

The region spanning 4-211 (NLGLIDYGMG…LTWLRNGAEP (208 aa)) is the Glutamine amidotransferase type-1 domain. Catalysis depends on Cys-82, which acts as the Nucleophile. Active-site residues include His-186 and Glu-188.

As to quaternary structure, heterodimer of HisH and HisF.

It is found in the cytoplasm. The catalysed reaction is 5-[(5-phospho-1-deoxy-D-ribulos-1-ylimino)methylamino]-1-(5-phospho-beta-D-ribosyl)imidazole-4-carboxamide + L-glutamine = D-erythro-1-(imidazol-4-yl)glycerol 3-phosphate + 5-amino-1-(5-phospho-beta-D-ribosyl)imidazole-4-carboxamide + L-glutamate + H(+). It carries out the reaction L-glutamine + H2O = L-glutamate + NH4(+). It functions in the pathway amino-acid biosynthesis; L-histidine biosynthesis; L-histidine from 5-phospho-alpha-D-ribose 1-diphosphate: step 5/9. IGPS catalyzes the conversion of PRFAR and glutamine to IGP, AICAR and glutamate. The HisH subunit catalyzes the hydrolysis of glutamine to glutamate and ammonia as part of the synthesis of IGP and AICAR. The resulting ammonia molecule is channeled to the active site of HisF. The protein is Imidazole glycerol phosphate synthase subunit HisH of Synechococcus sp. (strain CC9605).